The sequence spans 152 residues: SsrA-binding protein (152 aa).

The protein belongs to the SmpB family.

It localises to the cytoplasm. Required for rescue of stalled ribosomes mediated by trans-translation. Binds to transfer-messenger RNA (tmRNA), required for stable association of tmRNA with ribosomes. tmRNA and SmpB together mimic tRNA shape, replacing the anticodon stem-loop with SmpB. tmRNA is encoded by the ssrA gene; the 2 termini fold to resemble tRNA(Ala) and it encodes a 'tag peptide', a short internal open reading frame. During trans-translation Ala-aminoacylated tmRNA acts like a tRNA, entering the A-site of stalled ribosomes, displacing the stalled mRNA. The ribosome then switches to translate the ORF on the tmRNA; the nascent peptide is terminated with the 'tag peptide' encoded by the tmRNA and targeted for degradation. The ribosome is freed to recommence translation, which seems to be the essential function of trans-translation. This Helicobacter pylori (strain J99 / ATCC 700824) (Campylobacter pylori J99) protein is SsrA-binding protein.